A 425-amino-acid chain; its full sequence is Dual-specificity RNA methyltransferase RlmN (425 aa).

The Proton acceptor role is filled by E136. The Radical SAM core domain maps to 142 to 389; it reads GDDRGTLCVS…VRTPRGRDIL (248 aa). The cysteines at positions 149 and 392 are disulfide-linked. The [4Fe-4S] cluster site is built by C156, C160, and C163. Residues 218–219, S250, 272–274, and N349 each bind S-adenosyl-L-methionine; these read GE and SLH. The active-site S-methylcysteine intermediate is C392.

The protein belongs to the radical SAM superfamily. RlmN family. The cofactor is [4Fe-4S] cluster.

It is found in the cytoplasm. The enzyme catalyses adenosine(2503) in 23S rRNA + 2 reduced [2Fe-2S]-[ferredoxin] + 2 S-adenosyl-L-methionine = 2-methyladenosine(2503) in 23S rRNA + 5'-deoxyadenosine + L-methionine + 2 oxidized [2Fe-2S]-[ferredoxin] + S-adenosyl-L-homocysteine. The catalysed reaction is adenosine(37) in tRNA + 2 reduced [2Fe-2S]-[ferredoxin] + 2 S-adenosyl-L-methionine = 2-methyladenosine(37) in tRNA + 5'-deoxyadenosine + L-methionine + 2 oxidized [2Fe-2S]-[ferredoxin] + S-adenosyl-L-homocysteine. Its function is as follows. Specifically methylates position 2 of adenine 2503 in 23S rRNA and position 2 of adenine 37 in tRNAs. m2A2503 modification seems to play a crucial role in the proofreading step occurring at the peptidyl transferase center and thus would serve to optimize ribosomal fidelity. This is Dual-specificity RNA methyltransferase RlmN from Methylorubrum populi (strain ATCC BAA-705 / NCIMB 13946 / BJ001) (Methylobacterium populi).